Reading from the N-terminus, the 202-residue chain is Ribosome maturation factor RimP (202 aa).

The protein belongs to the RimP family.

The protein resides in the cytoplasm. Its function is as follows. Required for maturation of 30S ribosomal subunits. This chain is Ribosome maturation factor RimP, found in Paracidovorax citrulli (strain AAC00-1) (Acidovorax citrulli).